The primary structure comprises 439 residues: Trigger factor (439 aa).

Residues 163–248 (GDIAVIDFEG…LNQIKERVLP (86 aa)) enclose the PPIase FKBP-type domain.

It belongs to the FKBP-type PPIase family. Tig subfamily.

It is found in the cytoplasm. It carries out the reaction [protein]-peptidylproline (omega=180) = [protein]-peptidylproline (omega=0). In terms of biological role, involved in protein export. Acts as a chaperone by maintaining the newly synthesized protein in an open conformation. Functions as a peptidyl-prolyl cis-trans isomerase. The chain is Trigger factor from Syntrophotalea carbinolica (strain DSM 2380 / NBRC 103641 / GraBd1) (Pelobacter carbinolicus).